The chain runs to 263 residues: Aminoglycoside 3'-phosphotransferase (263 aa).

D183 acts as the Proton acceptor in catalysis.

The protein belongs to the aminoglycoside phosphotransferase family.

The catalysed reaction is kanamycin A + ATP = kanamycin 3'-phosphate + ADP + H(+). Its function is as follows. Resistance to kanamycin and structurally-related aminoglycosides, including amikacin. This Streptomyces ribosidificus protein is Aminoglycoside 3'-phosphotransferase (rph).